Reading from the N-terminus, the 769-residue chain is Cap-specific mRNA (nucleoside-2'-O-)-methyltransferase 2 (769 aa).

An Adrift-type SAM-dependent 2'-O-MTase domain is found at 109–322 (ELCTQAWCKF…VYVVCLYYKG (214 aa)). Residue lysine 117 is part of the active site. Glycine 148, tryptophan 167, and aspartate 235 together coordinate S-adenosyl-L-methionine. The active site involves aspartate 235. The active-site Proton acceptor is the lysine 275.

The protein resides in the nucleus. It localises to the cytoplasm. The enzyme catalyses a 5'-end (N(7)-methyl 5'-triphosphoguanosine)-(2'-O-methyl-ribonucleoside)-(ribonucleotide) in mRNA + S-adenosyl-L-methionine = a 5'-end (N(7)-methyl 5'-triphosphoguanosine)-(2'-O-methyl-ribonucleoside)-(2'-O-methyl-ribonucleotide) in mRNA + S-adenosyl-L-homocysteine + H(+). In terms of biological role, S-adenosyl-L-methionine-dependent methyltransferase that mediates mRNA cap2 2'-O-ribose methylation to the 5'-cap structure of mRNAs. Methylates the ribose of the second nucleotide of a m(7)GpppG-capped mRNA and small nuclear RNA (snRNA) (cap0) to produce m(7)GpppRmpNm (cap2). Recognizes a guanosine cap on RNA independently of its N(7) methylation status. Display cap2 methylation on both cap0 and cap1. Displays a preference for cap1 RNAs. This Pongo abelii (Sumatran orangutan) protein is Cap-specific mRNA (nucleoside-2'-O-)-methyltransferase 2 (CMTR2).